The primary structure comprises 533 residues: Atypical kinase COQ8B, mitochondrial (533 aa).

The chain crosses the membrane as a helical span at residues 93-109 (LASFGGLAVGLGLGALA). The KxGQ motif motif lies at 156 to 159 (KIGQ). In terms of domain architecture, Protein kinase spans 192–424 (MMRVLEEELG…DRVLQKSQDL (233 aa)). The AAAS motif motif lies at 217–220 (AAAS). ATP-binding positions include Ser-220, Lys-238, and 325 to 328 (MELA). Asp-368 acts as the Proton acceptor in catalysis. 2 residues coordinate ATP: Asn-373 and Asp-387.

The protein belongs to the protein kinase superfamily. ADCK protein kinase family. In terms of assembly, homodimer; homodimerizes via its transmembrane region. Interacts with COQ6 and COQ7. Interacts with the multi-subunit COQ enzyme complex, composed of at least COQ3, COQ4, COQ5, COQ6, COQ7 and COQ9.

It is found in the mitochondrion membrane. The protein localises to the cytoplasm. The protein resides in the cytosol. It localises to the cell membrane. It participates in cofactor biosynthesis; ubiquinone biosynthesis. Atypical kinase involved in the biosynthesis of coenzyme Q, also named ubiquinone, an essential lipid-soluble electron transporter for aerobic cellular respiration. Its substrate specificity is still unclear: may act as a protein kinase that mediates phosphorylation of COQ3. According to other reports, acts as a small molecule kinase, possibly a lipid kinase that phosphorylates a prenyl lipid in the ubiquinone biosynthesis pathway, as suggested by its ability to bind coenzyme Q lipid intermediates. However, the small molecule kinase activity was not confirmed by another publication. Required for podocyte migration. The polypeptide is Atypical kinase COQ8B, mitochondrial (Mus musculus (Mouse)).